The following is a 79-amino-acid chain: Small ribosomal subunit protein bS16 (79 aa).

It belongs to the bacterial ribosomal protein bS16 family.

The chain is Small ribosomal subunit protein bS16 from Hahella chejuensis (strain KCTC 2396).